A 428-amino-acid polypeptide reads, in one-letter code: Histidine--tRNA ligase (428 aa).

This sequence belongs to the class-II aminoacyl-tRNA synthetase family. In terms of assembly, homodimer.

The protein resides in the cytoplasm. It catalyses the reaction tRNA(His) + L-histidine + ATP = L-histidyl-tRNA(His) + AMP + diphosphate + H(+). The protein is Histidine--tRNA ligase of Halalkalibacterium halodurans (strain ATCC BAA-125 / DSM 18197 / FERM 7344 / JCM 9153 / C-125) (Bacillus halodurans).